Consider the following 152-residue polypeptide: UPF0266 membrane protein YobD (152 aa).

The next 3 helical transmembrane spans lie at 6-26, 45-65, and 67-87; these read LVLI…QFIM, IDSV…VTNH, and ALIT…IFWI.

Belongs to the UPF0266 family.

Its subcellular location is the cell inner membrane. This is UPF0266 membrane protein YobD from Escherichia coli O157:H7 (strain EC4115 / EHEC).